Here is a 413-residue protein sequence, read N- to C-terminus: MEQIPFVSSAPNTLGIELELQLVDPRSFDLAAASDELLAQLANHPIADRVKPEITRSMIELNSSVHEHPAGLLAEMREMRDVLCEAADAVGVGVTGGGAHPFMRWQDRAISDTPRFQYLAEMYGYLARQFTVFGQHIHLGVPSGDAAVRMVRGLSPYVPHFIALSAASPYCEGVDTLFSCCRLNAVNSFPLAGHMPADVTDWYRFEAHLAQLRASGLAESIKDLYWDIRPKPEYGTVEIRVCDTPLTVERACQLAAFAQALAVQVARDPEPSQQAWLAYRSNHFQACRFGLHGSYVTPDGQRVRLVDHLRALFDRLAPVAEELGTGDMLQTLRDEILRNGNDARWLRGQFLKVRELPLVVESMAQNWRGQGVQDTPPSAVRRRIRATSEPVGGVCALSTPQGDPLPGWAERLH.

The interval Gly392–His413 is disordered.

This sequence belongs to the glutamate--cysteine ligase type 2 family. YbdK subfamily.

The catalysed reaction is L-cysteine + L-glutamate + ATP = gamma-L-glutamyl-L-cysteine + ADP + phosphate + H(+). In terms of biological role, ATP-dependent carboxylate-amine ligase which exhibits weak glutamate--cysteine ligase activity. The protein is Putative glutamate--cysteine ligase 2 of Bordetella bronchiseptica (strain ATCC BAA-588 / NCTC 13252 / RB50) (Alcaligenes bronchisepticus).